Reading from the N-terminus, the 474-residue chain is 3-isopropylmalate dehydratase large subunit (474 aa).

[4Fe-4S] cluster-binding residues include C355, C415, and C418.

Belongs to the aconitase/IPM isomerase family. LeuC type 1 subfamily. Heterodimer of LeuC and LeuD. [4Fe-4S] cluster serves as cofactor.

It catalyses the reaction (2R,3S)-3-isopropylmalate = (2S)-2-isopropylmalate. It functions in the pathway amino-acid biosynthesis; L-leucine biosynthesis; L-leucine from 3-methyl-2-oxobutanoate: step 2/4. Its function is as follows. Catalyzes the isomerization between 2-isopropylmalate and 3-isopropylmalate, via the formation of 2-isopropylmaleate. The polypeptide is 3-isopropylmalate dehydratase large subunit (Shewanella sp. (strain MR-4)).